A 316-amino-acid polypeptide reads, in one-letter code: Methionyl-tRNA formyltransferase (316 aa).

112–115 (SLLP) contacts (6S)-5,6,7,8-tetrahydrofolate.

This sequence belongs to the Fmt family.

The enzyme catalyses L-methionyl-tRNA(fMet) + (6R)-10-formyltetrahydrofolate = N-formyl-L-methionyl-tRNA(fMet) + (6S)-5,6,7,8-tetrahydrofolate + H(+). In terms of biological role, attaches a formyl group to the free amino group of methionyl-tRNA(fMet). The formyl group appears to play a dual role in the initiator identity of N-formylmethionyl-tRNA by promoting its recognition by IF2 and preventing the misappropriation of this tRNA by the elongation apparatus. The sequence is that of Methionyl-tRNA formyltransferase from Flavobacterium psychrophilum (strain ATCC 49511 / DSM 21280 / CIP 103535 / JIP02/86).